Here is a 420-residue protein sequence, read N- to C-terminus: MSNIRYISNLTRDTYALILAGGRGSRLYELTDWRAKPALYFGGKYRIIDFPLSNCINSGIRRVGVVTQYKSHSLIRHVTRGWGHFKKELGESVEILPASQQTSGNWYQGTADAVFQNIDIIRQEIPKYVMILSGDHIYRMDYAGLLAAHAESGAEMTVCCLETPIDEAAGAFGVMEVDSEHRVIGFEEKPAEPKSIPSDPTMCLASMGNYVFNTKFLFEQLKKDANNEKSDRDFGKDIIPAIIENHKVFAFPFSSAVAGQPSYWRDVGTLDSFFQANMELLLPTPPLNLYDAKWPIWTYQEQLPPAKFVFDDDDRRGMAVDSIVSGGCIISGAKVKRCVLFDEVRVCSYSFVKDSVLLPDVVVLKNCKIQNAILDRGCIIPEGMVIGYNHDHDRAKGFRVSEKGVTLVTRKMLGLPVGYE.

Alpha-D-glucose 1-phosphate is bound by residues Tyr107, Gly173, 188-189 (EK), and Ser206.

It belongs to the bacterial/plant glucose-1-phosphate adenylyltransferase family. Homotetramer.

It carries out the reaction alpha-D-glucose 1-phosphate + ATP + H(+) = ADP-alpha-D-glucose + diphosphate. It participates in glycan biosynthesis; glycogen biosynthesis. Its function is as follows. Involved in the biosynthesis of ADP-glucose, a building block required for the elongation reactions to produce glycogen. Catalyzes the reaction between ATP and alpha-D-glucose 1-phosphate (G1P) to produce pyrophosphate and ADP-Glc. The polypeptide is Glucose-1-phosphate adenylyltransferase (Shewanella frigidimarina (strain NCIMB 400)).